The following is a 90-amino-acid chain: UPF0223 protein SH1855 (90 aa).

Belongs to the UPF0223 family.

The sequence is that of UPF0223 protein SH1855 from Staphylococcus haemolyticus (strain JCSC1435).